Consider the following 87-residue polypeptide: Hemocyanin alpha chain (87 aa).

It belongs to the tyrosinase family. Hemocyanin subfamily. In terms of assembly, polymer that contains six different types of chains (alpha, beta, gamma, delta, epsilon, and zeta). In terms of tissue distribution, hemolymph.

It is found in the secreted. The protein localises to the extracellular space. Functionally, hemocyanins are copper-containing oxygen carriers occurring freely dissolved in the hemolymph of many mollusks and arthropods. In Tachypleus tridentatus (Japanese horseshoe crab), this protein is Hemocyanin alpha chain.